Consider the following 252-residue polypeptide: Chitooligosaccharide deacetylase (252 aa).

The Mg(2+) site is built by His61 and His125.

The protein belongs to the YdjC deacetylase family. ChbG subfamily. Homodimer. The cofactor is Mg(2+).

The protein localises to the cytoplasm. It carries out the reaction N,N'-diacetylchitobiose + H2O = N-acetyl-beta-D-glucosaminyl-(1-&gt;4)-D-glucosamine + acetate. The catalysed reaction is diacetylchitobiose-6'-phosphate + H2O = N'-monoacetylchitobiose-6'-phosphate + acetate. It participates in glycan degradation; chitin degradation. Involved in the degradation of chitin. ChbG is essential for growth on the acetylated chitooligosaccharides chitobiose and chitotriose but is dispensable for growth on cellobiose and chitosan dimer, the deacetylated form of chitobiose. Deacetylation of chitobiose-6-P and chitotriose-6-P is necessary for both the activation of the chb promoter by the regulatory protein ChbR and the hydrolysis of phosphorylated beta-glucosides by the phospho-beta-glucosidase ChbF. Catalyzes the removal of only one acetyl group from chitobiose-6-P to yield monoacetylchitobiose-6-P, the inducer of ChbR and the substrate of ChbF. The polypeptide is Chitooligosaccharide deacetylase (Salmonella typhi).